The chain runs to 204 residues: N-(5'-phosphoribosyl)anthranilate isomerase (204 aa).

Belongs to the TrpF family.

The enzyme catalyses N-(5-phospho-beta-D-ribosyl)anthranilate = 1-(2-carboxyphenylamino)-1-deoxy-D-ribulose 5-phosphate. Its pathway is amino-acid biosynthesis; L-tryptophan biosynthesis; L-tryptophan from chorismate: step 3/5. The chain is N-(5'-phosphoribosyl)anthranilate isomerase from Bacillus cereus (strain Q1).